Consider the following 188-residue polypeptide: Protein TIFY 9 (188 aa).

The tract at residues 20–41 (DADDRHAKSGGSSASSSSSIRG) is disordered. Low complexity predominate over residues 28–38 (SGGSSASSSSS). The region spanning 80 to 114 (AAAAAAPMTLFYNGSVAVFDVSHDKAEAIMRMATE) is the Tify domain. Positions 135–160 (PLTRTKSLQRFLSKRKERLTSLGPYQ) match the Jas motif. Residues 156–188 (LGPYQVGGPAAVGATTSTTTKSFLAKEEEHTAS) form a disordered region. Residues 179 to 188 (LAKEEEHTAS) show a composition bias toward basic and acidic residues.

The protein belongs to the TIFY/JAZ family. In terms of assembly, interacts with COI1A and COI2 in a coronatine-dependent manner. Coronatine is an analog of jasmonoyl isoleucine (JA-Ile). Post-translationally, ubiquitinated. Targeted for degradation by the SCF(COI1) E3 ubiquitin ligase-proteasome pathway during jasmonate signaling.

In terms of biological role, repressor of jasmonate responses. This chain is Protein TIFY 9, found in Oryza sativa subsp. japonica (Rice).